The following is a 497-amino-acid chain: Glycerol kinase (497 aa).

Thr12 is a binding site for ADP. Thr12, Thr13, and Ser14 together coordinate ATP. Thr12 lines the sn-glycerol 3-phosphate pocket. Residue Arg16 coordinates ADP. 4 residues coordinate sn-glycerol 3-phosphate: Arg82, Glu83, Tyr134, and Asp243. 5 residues coordinate glycerol: Arg82, Glu83, Tyr134, Asp243, and Gln244. ADP contacts are provided by Thr265 and Gly308. ATP-binding residues include Thr265, Gly308, Gln312, and Gly411. Position 411 (Gly411) interacts with ADP.

The protein belongs to the FGGY kinase family.

It carries out the reaction glycerol + ATP = sn-glycerol 3-phosphate + ADP + H(+). It functions in the pathway polyol metabolism; glycerol degradation via glycerol kinase pathway; sn-glycerol 3-phosphate from glycerol: step 1/1. Its activity is regulated as follows. Inhibited by fructose 1,6-bisphosphate (FBP). Its function is as follows. Key enzyme in the regulation of glycerol uptake and metabolism. Catalyzes the phosphorylation of glycerol to yield sn-glycerol 3-phosphate. This is Glycerol kinase from Xanthobacter autotrophicus (strain ATCC BAA-1158 / Py2).